The following is a 360-amino-acid chain: MQFFENDSYLRSALRKSVKRTPIWIMRQSGRYLKEYQSIKKQAKDFLSLCKTPDLSSKAALIPIKKFSLDAAIIFSDILILPYAMGMDVNFYENLGPSFLNPISSISDMKNLNVPDPEKNLKYVLDSIKIICKELDKKIPLIGFSGSPWTLACYMIEGKCNKIFSKIKKMIYQNSKELHFLLKKITNSIILYLNSQIIYGVNAIIIFDTWGGILTEEKYCEYSLHYMSLIIKNLFCKYKGNKIPVTIFTKNGGQWIKKIAKSGCDVIALDWSVDIEYARKQVNGKIAIQGNMDPFELYGSFSSIEEETNKILSKFGYNSGHIFSLGHGIYKDTPPENVNFLIESVHNLSKKYHKKNRFKK.

Substrate-binding positions include arginine 27–arginine 31, phenylalanine 46, aspartate 77, tyrosine 154, threonine 209, and histidine 327.

The protein belongs to the uroporphyrinogen decarboxylase family. Homodimer.

It localises to the cytoplasm. The enzyme catalyses uroporphyrinogen III + 4 H(+) = coproporphyrinogen III + 4 CO2. Its pathway is porphyrin-containing compound metabolism; protoporphyrin-IX biosynthesis; coproporphyrinogen-III from 5-aminolevulinate: step 4/4. Functionally, catalyzes the decarboxylation of four acetate groups of uroporphyrinogen-III to yield coproporphyrinogen-III. The polypeptide is Uroporphyrinogen decarboxylase (Wigglesworthia glossinidia brevipalpis).